We begin with the raw amino-acid sequence, 265 residues long: uncharacterized protein (265 aa).

Residues 3–23 form a helical; Signal-anchor for type II membrane protein membrane-spanning segment; sequence KKTWVYIIIAIIIILLLVWYF. N-linked (GlcNAc...) asparagine; by host glycans are attached at residues Asn37 and Asn125. A coiled-coil region spans residues 37–94; sequence NQTYNMLQQQISSLNQQILFLKQQISNLHVPAPTSTVNSLRQTVSDINQQVSTINNQI. The stretch at 158–257 forms a coiled coil; the sequence is NVADNELNVL…KNSLGSAVRN (100 aa).

It localises to the host membrane. It is found in the virion. This is an uncharacterized protein from Acanthamoeba polyphaga (Amoeba).